We begin with the raw amino-acid sequence, 118 residues long: NADH-ubiquinone oxidoreductase chain 3 (118 aa).

3 helical membrane-spanning segments follow: residues isoleucine 9–alanine 29, leucine 62–valine 82, and isoleucine 87–leucine 107.

This sequence belongs to the complex I subunit 3 family.

Its subcellular location is the mitochondrion membrane. The catalysed reaction is a ubiquinone + NADH + 5 H(+)(in) = a ubiquinol + NAD(+) + 4 H(+)(out). Its function is as follows. Core subunit of the mitochondrial membrane respiratory chain NADH dehydrogenase (Complex I) that is believed to belong to the minimal assembly required for catalysis. Complex I functions in the transfer of electrons from NADH to the respiratory chain. The immediate electron acceptor for the enzyme is believed to be ubiquinone. This chain is NADH-ubiquinone oxidoreductase chain 3 (ND3), found in Zea mays (Maize).